The chain runs to 354 residues: MRVLGIESSCDETGVALVEVRGSVLPVLLADALYSQIEMHQAYGGVVPELASRDHIRRVLPLTEQVLAASGRTLADIDVVAFTRGPGLAGALLVGAGVACALGAALGKPVLGVHHLEGHLLSPFLSADPPEFPFVALLVSGGHTQLMRVDGVGRYELLGETIDDAAGEAFDKSAKLLGLAYPGGPALSRLAEQGDATAFKLPRPLLKSGNLDFSFAGLKTAVMVQAKKLAAAQDGSVEALPVQVLADLAASTQAAIVEVLVKKSMTALSQTSLKRLVVAGGVGANRSLRAQLNAECGKRGVRVHYPELHLCTDNGAMIAMAAAMRLQSGQQAASEVYAFDVRPRWPLGDLTASA.

His-115 and His-119 together coordinate Fe cation. Residues 138-142, Asp-171, Gly-184, and Asn-285 each bind substrate; that span reads LVSGG. Asp-313 contributes to the Fe cation binding site.

It belongs to the KAE1 / TsaD family. Fe(2+) is required as a cofactor.

The protein resides in the cytoplasm. It carries out the reaction L-threonylcarbamoyladenylate + adenosine(37) in tRNA = N(6)-L-threonylcarbamoyladenosine(37) in tRNA + AMP + H(+). Its function is as follows. Required for the formation of a threonylcarbamoyl group on adenosine at position 37 (t(6)A37) in tRNAs that read codons beginning with adenine. Is involved in the transfer of the threonylcarbamoyl moiety of threonylcarbamoyl-AMP (TC-AMP) to the N6 group of A37, together with TsaE and TsaB. TsaD likely plays a direct catalytic role in this reaction. In Albidiferax ferrireducens (strain ATCC BAA-621 / DSM 15236 / T118) (Rhodoferax ferrireducens), this protein is tRNA N6-adenosine threonylcarbamoyltransferase.